A 41-amino-acid polypeptide reads, in one-letter code: Divisome-associated membrane protein Blr (41 aa).

The Cytoplasmic segment spans residues 1-3 (MNR). Residues 4-24 (LIELTGWIVLVVSVILLGVAS) traverse the membrane as a helical segment. Over 25–41 (HIDNYQPPEQSASVQHK) the chain is Periplasmic.

As to quaternary structure, interacts with FtsL and several other divisomal proteins, including FtsI, FtsK, FtsN, FtsQ, FtsW and YmgF. In terms of processing, the N-terminus is blocked.

The protein resides in the cell inner membrane. Its function is as follows. Component of the cell division machinery, which is probably involved in the stabilization of the divisome under certain stress conditions. The protein is Divisome-associated membrane protein Blr (blr) of Escherichia coli (strain K12).